Consider the following 102-residue polypeptide: NADH-quinone oxidoreductase subunit K (102 aa).

3 helical membrane passes run 6–26, 30–50, and 63–83; these read LIGM…GVLA, ILFQ…AFVA, and MLIL…ALLL.

Belongs to the complex I subunit 4L family. In terms of assembly, NDH-1 is composed of 14 different subunits. Subunits NuoA, H, J, K, L, M, N constitute the membrane sector of the complex.

Its subcellular location is the cell inner membrane. It carries out the reaction a quinone + NADH + 5 H(+)(in) = a quinol + NAD(+) + 4 H(+)(out). Functionally, NDH-1 shuttles electrons from NADH, via FMN and iron-sulfur (Fe-S) centers, to quinones in the respiratory chain. The immediate electron acceptor for the enzyme in this species is believed to be ubiquinone. Couples the redox reaction to proton translocation (for every two electrons transferred, four hydrogen ions are translocated across the cytoplasmic membrane), and thus conserves the redox energy in a proton gradient. The sequence is that of NADH-quinone oxidoreductase subunit K from Rhodopseudomonas palustris (strain HaA2).